Consider the following 163-residue polypeptide: Nucleotide-binding protein PM1656 (163 aa).

This sequence belongs to the YajQ family.

Functionally, nucleotide-binding protein. The chain is Nucleotide-binding protein PM1656 from Pasteurella multocida (strain Pm70).